A 61-amino-acid polypeptide reads, in one-letter code: Temporin-ALi (61 aa).

Residues 1 to 22 form the signal peptide; sequence MFPLKKSLLLLFFLATINLSLC. The propeptide occupies 23–46; the sequence is EQERNAEEERRDEPDERNAEVEKR. L59 is modified (leucine amide).

It belongs to the frog skin active peptide (FSAP) family. Temporin subfamily. Expressed by the skin glands.

It localises to the secreted. Its function is as follows. Antimicrobial peptide with activity against Gram-positive and Gram-negative bacteria and against fungi. Has been tested against S.aureus (MIC=7.5 ug/mL), B.pumilus (MIC=7.5 ug/mL), B.cereus (MIC=75.0 ug/mL), E.coli (MIC=7.5 ug/mL), B.dysenteriae (MIC=20.0 ug/mL), A.cacoaceticus (MIC=60.0 ug/mL), P.aeruginosa (MIC=5.0 ug/mL) and C.albicans (MIC=5.0 ug/mL). Also shows a weak hemolytic activity. The protein is Temporin-ALi of Amolops loloensis (Lolokou Sucker Frog).